Reading from the N-terminus, the 396-residue chain is L-lactate dehydrogenase (396 aa).

Positions 1–380 (MIISAASDYR…TQDSLVQELS (380 aa)) constitute an FMN hydroxy acid dehydrogenase domain. Substrate is bound at residue Tyr24. FMN is bound by residues Ser106 and Gln127. Tyr129 is a substrate binding site. An FMN-binding site is contributed by Thr155. Residue Arg164 participates in substrate binding. Lys251 is a binding site for FMN. Residue His275 is the Proton acceptor of the active site. Substrate is bound at residue Arg278. 306 to 330 (DSGIRNGLDVVRMIALGADTVLLGR) contributes to the FMN binding site.

The protein belongs to the FMN-dependent alpha-hydroxy acid dehydrogenase family. Requires FMN as cofactor.

It localises to the cell inner membrane. It carries out the reaction (S)-lactate + A = pyruvate + AH2. Its function is as follows. Catalyzes the conversion of L-lactate to pyruvate. Is coupled to the respiratory chain. The polypeptide is L-lactate dehydrogenase (Escherichia coli (strain SMS-3-5 / SECEC)).